A 430-amino-acid chain; its full sequence is Adenylosuccinate synthetase (430 aa).

Residues 12–18 (GDEGKGK) and 40–42 (GHT) each bind GTP. Aspartate 13 functions as the Proton acceptor in the catalytic mechanism. 2 residues coordinate Mg(2+): aspartate 13 and glycine 40. IMP is bound by residues 13–16 (DEGK), 38–41 (NAGH), threonine 128, arginine 142, glutamine 223, threonine 238, and arginine 302. Residue histidine 41 is the Proton donor of the active site. 298 to 304 (TTTGRPR) contributes to the substrate binding site. Residues arginine 304, 330 to 332 (SID), and 412 to 414 (SVG) contribute to the GTP site.

The protein belongs to the adenylosuccinate synthetase family. Homodimer. Mg(2+) is required as a cofactor.

The protein resides in the cytoplasm. It carries out the reaction IMP + L-aspartate + GTP = N(6)-(1,2-dicarboxyethyl)-AMP + GDP + phosphate + 2 H(+). It participates in purine metabolism; AMP biosynthesis via de novo pathway; AMP from IMP: step 1/2. In terms of biological role, plays an important role in the de novo pathway of purine nucleotide biosynthesis. Catalyzes the first committed step in the biosynthesis of AMP from IMP. The protein is Adenylosuccinate synthetase of Streptococcus equi subsp. equi (strain 4047).